An 834-amino-acid polypeptide reads, in one-letter code: MEDPAAPGTGGPPANGNGNGGGKGKQAAPKGREAFRSQRRESEGSVDCPTLEFEYGDADGHAAELSELYSYTENLEFTNNRRCFEEDFKTQVQGKEWLELEEDAQKAYIMGLLDRLEVVSRERRLKVARAVLYLAQGTFGECDSEVDVLHWSRYNCFLLYQMGTFSTFLELLHMEIDNSQACSSALRKPAVSIADSTELRVLLSVMYLMVENIRLERETDPCGWRTARETFRTELSFSMHNEEPFALLLFSMVTKFCSGLAPHFPIKKVLLLLWKVVMFTLGGFEHLQTLKVQKRAELGLPPLAEDSIQVVKSMRAASPPSYTLDLGESQLAPPPSKLRGRRGSRRQLLTKQDSLDIYNERDLFKTEEPATEEEEESAGDGERTLDGELDLLEQDPLVPPPPSQAPLSAERVAFPKGLPWAPKVRQKDIEHFLEMSRNKFIGFTLGQDTDTLVGLPRPIHESVKTLKQHKYISIADVQIKNEEELEKCPMSLGEEVVPETPCEILYQGMLYSLPQYMIALLKILLAAAPTSKAKTDSINILADVLPEEMPITVLQSMKLGIDVNRHKEIIVKSISTLLLLLLKHFKLNHIYQFEYVSQHLVFANCIPLILKFFNQNILSYITAKNSISVLDYPCCTIQDLPELTTESLEAGDNSQFCWRNLFSCINLLRLLNKLTKWKHSRTMMLVVFKSAPILKRALKVKQAMLQLYVLKLLKLQTKYLGRQWRKSNMKTMSAIYQKVRHRMNDDWAYGNDIDARPWDFQAEECTLRANIEAFNSRRYDRPQDSEFSPVDNCLQSVLGQRLDLPEDFHYSYELWLEREVFSQPICWEELLQNH.

A disordered region spans residues 1–48 (MEDPAAPGTGGPPANGNGNGGGKGKQAAPKGREAFRSQRRESEGSVDC). The segment covering 8 to 24 (GTGGPPANGNGNGGGKG) has biased composition (gly residues). Over residues 30–43 (KGREAFRSQRRESE) the composition is skewed to basic and acidic residues. Residues serine 318, serine 329, and serine 354 each carry the phosphoserine modification. Residues 321–345 (SYTLDLGESQLAPPPSKLRGRRGSR) are disordered. The interval 360 to 382 (ERDLFKTEEPATEEEEESAGDGE) is disordered. A compositionally biased stretch (acidic residues) spans 369–379 (PATEEEEESAG).

It belongs to the STRIP family. Part of the core of STRIPAK complexes composed of PP2A catalytic and scaffolding subunits, the striatins (PP2A regulatory subunits), the striatin-associated proteins MOB4, STRIP1 and STRIP2, PDCD10 and members of the STE20 kinases, such as STK24 and STK26. Interacts with CTTNBP2NL.

It is found in the cytoplasm. Its function is as follows. Plays a role in the regulation of cell morphology and cytoskeletal organization. Required in the control of cell shape. Calmodulin-binding scaffolding protein which is the center of the striatin-interacting phosphatase and kinase (STRIPAK) complexes. STRIPAK complexes have critical roles in protein (de)phosphorylation and are regulators of multiple signaling pathways including Hippo, MAPK, nuclear receptor and cytoskeleton remodeling. Different types of STRIPAK complexes are involved in a variety of biological processes such as cell growth, differentiation, apoptosis, metabolism and immune regulation. The chain is Striatin-interacting protein 2 from Homo sapiens (Human).